The chain runs to 301 residues: uncharacterized protein (301 aa).

This sequence belongs to the asfivirus E301R family. As to quaternary structure, interacts with host IRF3.

Plays a role in the inhibition of host innate immune system by acting as a negatively regulator of type I interferon production. Mechanistically, interacts with and prevents host IRF3 nuclear localization to inhibit its transcriptional activity. This is an uncharacterized protein from African swine fever virus (isolate Tick/South Africa/Pretoriuskop Pr4/1996) (ASFV).